Reading from the N-terminus, the 317-residue chain is 4-hydroxy-3-methylbut-2-enyl diphosphate reductase (317 aa).

C12 contacts [4Fe-4S] cluster. Residues H41 and H74 each coordinate (2E)-4-hydroxy-3-methylbut-2-enyl diphosphate. Dimethylallyl diphosphate is bound by residues H41 and H74. The isopentenyl diphosphate site is built by H41 and H74. C97 is a [4Fe-4S] cluster binding site. H125 is a (2E)-4-hydroxy-3-methylbut-2-enyl diphosphate binding site. H125 provides a ligand contact to dimethylallyl diphosphate. H125 contributes to the isopentenyl diphosphate binding site. E127 acts as the Proton donor in catalysis. T168 is a (2E)-4-hydroxy-3-methylbut-2-enyl diphosphate binding site. C198 is a [4Fe-4S] cluster binding site. Residues S226, S227, N228, and S270 each coordinate (2E)-4-hydroxy-3-methylbut-2-enyl diphosphate. Dimethylallyl diphosphate contacts are provided by S226, S227, N228, and S270. Isopentenyl diphosphate is bound by residues S226, S227, N228, and S270.

It belongs to the IspH family. As to quaternary structure, homodimer. [4Fe-4S] cluster is required as a cofactor.

The catalysed reaction is isopentenyl diphosphate + 2 oxidized [2Fe-2S]-[ferredoxin] + H2O = (2E)-4-hydroxy-3-methylbut-2-enyl diphosphate + 2 reduced [2Fe-2S]-[ferredoxin] + 2 H(+). It carries out the reaction dimethylallyl diphosphate + 2 oxidized [2Fe-2S]-[ferredoxin] + H2O = (2E)-4-hydroxy-3-methylbut-2-enyl diphosphate + 2 reduced [2Fe-2S]-[ferredoxin] + 2 H(+). It participates in isoprenoid biosynthesis; dimethylallyl diphosphate biosynthesis; dimethylallyl diphosphate from (2E)-4-hydroxy-3-methylbutenyl diphosphate: step 1/1. Its pathway is isoprenoid biosynthesis; isopentenyl diphosphate biosynthesis via DXP pathway; isopentenyl diphosphate from 1-deoxy-D-xylulose 5-phosphate: step 6/6. In terms of biological role, catalyzes the conversion of 1-hydroxy-2-methyl-2-(E)-butenyl 4-diphosphate (HMBPP) into a mixture of isopentenyl diphosphate (IPP) and dimethylallyl diphosphate (DMAPP). Acts in the terminal step of the DOXP/MEP pathway for isoprenoid precursor biosynthesis. This is 4-hydroxy-3-methylbut-2-enyl diphosphate reductase from Serratia proteamaculans (strain 568).